Here is a 250-residue protein sequence, read N- to C-terminus: Ditrans,polycis-undecaprenyl-diphosphate synthase ((2E,6E)-farnesyl-diphosphate specific) (250 aa).

Residue Asp27 is part of the active site. A Mg(2+)-binding site is contributed by Asp27. Substrate-binding positions include 28–31, Trp32, Arg40, His44, and 72–74; these read GNGR and SSE. Asn75 (proton acceptor) is an active-site residue. Substrate contacts are provided by Trp76, Arg78, and Arg195. Residue His200 coordinates Mg(2+). 201 to 203 is a substrate binding site; it reads RIS. Glu214 contacts Mg(2+).

The protein belongs to the UPP synthase family. Homodimer. Mg(2+) is required as a cofactor.

The catalysed reaction is 8 isopentenyl diphosphate + (2E,6E)-farnesyl diphosphate = di-trans,octa-cis-undecaprenyl diphosphate + 8 diphosphate. In terms of biological role, catalyzes the sequential condensation of isopentenyl diphosphate (IPP) with (2E,6E)-farnesyl diphosphate (E,E-FPP) to yield (2Z,6Z,10Z,14Z,18Z,22Z,26Z,30Z,34E,38E)-undecaprenyl diphosphate (di-trans,octa-cis-UPP). UPP is the precursor of glycosyl carrier lipid in the biosynthesis of bacterial cell wall polysaccharide components such as peptidoglycan and lipopolysaccharide. This is Ditrans,polycis-undecaprenyl-diphosphate synthase ((2E,6E)-farnesyl-diphosphate specific) from Blochmanniella floridana.